A 256-amino-acid polypeptide reads, in one-letter code: NAD-dependent protein deacylase 4 (256 aa).

The region spanning 1-250 (MRLPAEALKD…AKIHESLSTG (250 aa)) is the Deacetylase sirtuin-type domain. 19–39 (GAGISAESGILTYLDQMPKLW) lines the NAD(+) pocket. Residues Tyr-64 and Arg-67 each coordinate substrate. NAD(+) is bound at residue 98-101 (QNVD). His-116 acts as the Proton acceptor in catalysis. Zn(2+) contacts are provided by Cys-124, Cys-127, Cys-152, and Cys-155. Residues 192–194 (GTS), 218–220 (NTV), and Ala-236 each bind NAD(+).

This sequence belongs to the sirtuin family. Class III subfamily. Requires Zn(2+) as cofactor.

The protein localises to the cytoplasm. It carries out the reaction N(6)-acetyl-L-lysyl-[protein] + NAD(+) + H2O = 2''-O-acetyl-ADP-D-ribose + nicotinamide + L-lysyl-[protein]. The catalysed reaction is N(6)-succinyl-L-lysyl-[protein] + NAD(+) + H2O = 2''-O-succinyl-ADP-D-ribose + nicotinamide + L-lysyl-[protein]. Functionally, NAD-dependent lysine deacetylase and desuccinylase that specifically removes acetyl and succinyl groups on target proteins. Modulates the activities of several proteins which are inactive in their acylated form. This chain is NAD-dependent protein deacylase 4, found in Pseudomonas syringae pv. tomato (strain ATCC BAA-871 / DC3000).